We begin with the raw amino-acid sequence, 126 residues long: Fluoride-specific ion channel FluC (126 aa).

4 helical membrane passes run 6–26 (VLLV…VALA), 32–52 (TGFP…IGFI), 68–90 (LLLT…ETGG), and 102–122 (LYVA…TLLA). Na(+) contacts are provided by Gly-76 and Thr-79.

The protein belongs to the fluoride channel Fluc/FEX (TC 1.A.43) family.

The protein resides in the cell inner membrane. It catalyses the reaction fluoride(in) = fluoride(out). Its activity is regulated as follows. Na(+) is not transported, but it plays an essential structural role and its presence is essential for fluoride channel function. In terms of biological role, fluoride-specific ion channel. Important for reducing fluoride concentration in the cell, thus reducing its toxicity. This Chlorobaculum tepidum (strain ATCC 49652 / DSM 12025 / NBRC 103806 / TLS) (Chlorobium tepidum) protein is Fluoride-specific ion channel FluC.